A 379-amino-acid polypeptide reads, in one-letter code: MCVAMVIIHTKTLEKKAVDDVTSEASLQPQEPLTMSQGTALFSCGIMDSGRWADVGSVCGVQQRPVGSSLESLWDSMREAGATGGISGLLRDLSLSEASPASAAPPSKRQCRSLSCSDELGCRSSWRPQGSRVWTTVEKRRCHSGGSVQRGVFNPSGFPAMQRSSSFSLPAHSSHLEPFTHGFPFQAFSECPQTPQTLYRSHEQICPAEASSPESTPELQRRSGQSGLARSRSQPCVHNHQKIGVKRRRPADSHKQRPSLDLLKMTQKLQDFHSLSCPGFSGDDKTLPSSSPALLNDTCERAQNDSSADAPIHQSESSSEDALIHQSDSSSADALIHQSESSRPAGKERECLWAGLCSRRGRDLFQLGGELDIEQIERN.

Disordered regions lie at residues Cys-206 to Arg-257 and Ala-302 to Glu-348. The segment covering Ser-212–Cys-236 has biased composition (polar residues). The span at Asn-239–Arg-249 shows a compositional bias: basic residues. The short motif at Lys-246–Arg-249 is the Nuclear localization signal element. Residues Gln-326 to Ser-342 are compositionally biased toward polar residues.

This sequence belongs to the FAM53 family. Interacts with ctnnb1. As to expression, mainly expressed in proliferating tissues.

The protein localises to the nucleus. Acts as a regulator of Wnt signaling pathway by regulating beta-catenin (ctnnb1) nuclear localization. Required for appendage regeneration by regulating cell proliferation. The protein is Protein FAM53B of Danio rerio (Zebrafish).